Reading from the N-terminus, the 313-residue chain is Curved DNA-binding protein (313 aa).

The region spanning 5–69 (DYYKILGVSR…EKRKAYDAIG (65 aa)) is the J domain. Residues 71-93 (GWKQGQGFTPPPGWESRPGGEGV) form a disordered region.

The protein resides in the cytoplasm. Its subcellular location is the nucleoid. In terms of biological role, DNA-binding protein that preferentially recognizes a curved DNA sequence. It is probably a functional analog of DnaJ; displays overlapping activities with DnaJ, but functions under different conditions, probably acting as a molecular chaperone in an adaptive response to environmental stresses other than heat shock. Lacks autonomous chaperone activity; binds native substrates and targets them for recognition by DnaK. Its activity is inhibited by the binding of CbpM. In Coxiella burnetii (strain Dugway 5J108-111), this protein is Curved DNA-binding protein.